A 105-amino-acid polypeptide reads, in one-letter code: Thioredoxin (105 aa).

The Thioredoxin domain occupies 1-105 (MASNVTDKSF…SLIEWINNNI (105 aa)). Residues Cys30 and Cys33 are joined by a disulfide bond.

This sequence belongs to the thioredoxin family.

Functionally, component of the thioredoxin-thioredoxin reductase system. Participates in various redox reactions through the reversible oxidation of its active center dithiol to a disulfide and catalyzes dithiol-disulfide exchange reactions. In Rickettsia bellii (strain RML369-C), this protein is Thioredoxin (trxA).